Reading from the N-terminus, the 904-residue chain is MAANNNSDPILDEGGGGGVKHEAVGEAGEGKGGGGGAAATQAPAAMLPRSGSRPQLDLSGAAIHGNLEDRNPTILLPNQSDDISHLALDIGGSLIKLVYFSRHAEHSSEDKRKLSTKRRLGMLNGGRRSYPVLGGRLHFVKFETGKLNECLDFISSKQLHRGGVDSPSWRSGAQPDNIVIKATGGGAFKYADLFKERLGVSLEKEDEMDCLVAGANFLLKSIRHEAFTHMDGQKEYVQIDQNDLFPFLLVNVGSGVSIIKVDGHGKFQRVSGTNVGGGTYWGLGRLMTKCKSFDELLELSQRGDNSTIDMLVGDIYGGLDYSKIGLSASTIASSFGKTISDDKELSDYRPEDISLSLLRMISYNIGQISYLNALRYGLKRIFFGGFFIRGHAYTMDTISFAVNFWSKGEAKAMFLRHEGFLGALGAFMSYEKHGLDDLRIHHLVERFPMGAPYVGGKIHGPPLGDLNEKISWMEKFVQKGTQITAPVPVGFPVTTGMGGFERPTAKGDILRSDASAALNVGVLHLVPTLDVFPLLEDPKMYEPNTIDLDLNEYKYWFKILSDHLPDLVDKAVASEGGTDDAKRRGDAFAHAFSAHLARLMEEPAAYGKFGLANLLELREECLREFQFVDAYVSIKQRENEASLAVLPDLLMELDSMNEEARLLALIEGVLAANIFDWGSRACVDLYHKGTIIEIYRMSRKKMQRPWRIDDFDMFKKRMLADKKGQPYKRALLFVDNSGADVVLGMIPLARELLRNGTEVVLVANSLPALNDVTANELPGIVAEAAKHCGILRKAAEAGGLIFDAMAGIQDDLKDEPVSVPLMVVENGCGSPCIDFRQVSSELAAAAKDADLLILEGMGRSLHTNLNARFKCDTLKLAMVKNQRLAEKLFNGNIYDCICKFEPVP.

A disordered region spans residues 1-56 (MAANNNSDPILDEGGGGGVKHEAVGEAGEGKGGGGGAAATQAPAAMLPRSGSRPQL). Residues 1–472 (MAANNNSDPI…LGDLNEKISW (472 aa)) form a pantothenate kinase region. The interval 473–904 (MEKFVQKGTQ…DCICKFEPVP (432 aa)) is 4'-phosphopantetheine phosphatase. Residues D735, N736, and D771 each contribute to the Mn(2+) site. Residues 855-859 (EGMGR) carry the Subfamily II EGMGR motif motif.

This sequence in the N-terminal section; belongs to the type II pantothenate kinase family. The protein in the C-terminal section; belongs to the damage-control phosphatase family. Phosphopantetheine phosphatase II subfamily. The cofactor is Mn(2+). Ni(2+) is required as a cofactor.

The catalysed reaction is (R)-pantothenate + ATP = (R)-4'-phosphopantothenate + ADP + H(+). It carries out the reaction (R)-4'-phosphopantothenate + H2O = (R)-pantothenate + phosphate. The enzyme catalyses (R)-4'-phosphopantetheine + H2O = (R)-pantetheine + phosphate. It catalyses the reaction (R)-4'-phosphopantetheine sulfonate + H2O = (R)-pantetheine sulfonate + phosphate. It participates in cofactor biosynthesis; coenzyme A biosynthesis; CoA from (R)-pantothenate: step 1/5. In terms of biological role, catalyzes the phosphorylation of pantothenate the first step in CoA biosynthesis. May play a role in the physiological regulation of the intracellular CoA concentration. Functionally redudant with PANK1. The phosphatase activity shows preference for normal or oxidatively damaged intermediates of 4'-phosphopantetheine, which provides strong indirect evidence that the phosphatase activity pre-empts damage in the CoA pathway. Hydrolyzing excess 4'-phosphopantetheine could constitute a directed overflow mechanism to prevent its oxidation to the S-sulfonate, sulfonate, or other forms. Hydrolyzing 4'-phosphopantetheine sulfonate or S-sulfonate would forestall their conversion to inactive forms of CoA and acyl carrier protein. This is Pantothenate kinase 2 from Oryza sativa subsp. japonica (Rice).